The chain runs to 289 residues: Phosphoribulokinase (289 aa).

ATP is bound at residue 12–20; it reads GSSGAGTTT.

It belongs to the phosphoribulokinase family.

The enzyme catalyses D-ribulose 5-phosphate + ATP = D-ribulose 1,5-bisphosphate + ADP + H(+). It participates in carbohydrate biosynthesis; Calvin cycle. This chain is Phosphoribulokinase (cbbP), found in Rhizobium meliloti (strain 1021) (Ensifer meliloti).